Here is an 87-residue protein sequence, read N- to C-terminus: Keratin-associated protein 19-1 (87 aa).

A 21 X 2 AA repeats of G-[YCGS] region spans residues 6–72 (GYSGGLGYGY…SSYGGYGCGC (67 aa)).

Belongs to the KRTAP type 19 family. Interacts with hair keratins. In terms of tissue distribution, strong expression in narrowly defined pattern restricted to the lower and middle cortical regions of the hair shaft in both developing and cycling hair. During hair follicle regression (catagen), expression levels decrease until expression is no longer detectable in follicles at resting stage (telogen).

In the hair cortex, hair keratin intermediate filaments are embedded in an interfilamentous matrix, consisting of hair keratin-associated proteins (KRTAP), which are essential for the formation of a rigid and resistant hair shaft through their extensive disulfide bond cross-linking with abundant cysteine residues of hair keratins. The matrix proteins include the high-sulfur and high-glycine-tyrosine keratins. This chain is Keratin-associated protein 19-1 (Krtap19-1), found in Mus musculus (Mouse).